We begin with the raw amino-acid sequence, 316 residues long: Pantothenate kinase (316 aa).

An ATP-binding site is contributed by 95–102; sequence GSVAVGKS.

This sequence belongs to the prokaryotic pantothenate kinase family.

The protein localises to the cytoplasm. The catalysed reaction is (R)-pantothenate + ATP = (R)-4'-phosphopantothenate + ADP + H(+). The protein operates within cofactor biosynthesis; coenzyme A biosynthesis; CoA from (R)-pantothenate: step 1/5. The sequence is that of Pantothenate kinase from Shewanella putrefaciens (strain CN-32 / ATCC BAA-453).